A 564-amino-acid chain; its full sequence is Cytochrome P450 monooxygenase fsdH (564 aa).

Residues 18-38 (GSVSLAVLSTLAVVIAGWYIL) traverse the membrane as a helical segment. Cys472 provides a ligand contact to heme.

This sequence belongs to the cytochrome P450 family. It depends on heme as a cofactor.

It localises to the membrane. It participates in mycotoxin biosynthesis. Functionally, cytochrome P450 monooxygenase; part of the gene cluster that mediates the biosynthesis of fusaridione A, a bright yellow trans-fused decalin-containing tetramic acid with antimicrobial activity. The PKS module of fsdS catalyzes the formation of the polyketide unit which is then conjugated to L-tyrosine by the condensation domain of the fsdS NRPS module. Activity of the Dieckmann cyclase domain (RED) results in release of the intermediate fusaridione A. The unstable pyrrolidinedione ring of fusaridione A is opened through a reverse-Dieckmann reaction to afford its ring-opened form. The protein is Cytochrome P450 monooxygenase fsdH of Fusarium heterosporum.